We begin with the raw amino-acid sequence, 369 residues long: Anhydro-N-acetylmuramic acid kinase (369 aa).

Gly-12–Asp-19 is an ATP binding site.

It belongs to the anhydro-N-acetylmuramic acid kinase family.

It carries out the reaction 1,6-anhydro-N-acetyl-beta-muramate + ATP + H2O = N-acetyl-D-muramate 6-phosphate + ADP + H(+). It functions in the pathway amino-sugar metabolism; 1,6-anhydro-N-acetylmuramate degradation. The protein operates within cell wall biogenesis; peptidoglycan recycling. Its function is as follows. Catalyzes the specific phosphorylation of 1,6-anhydro-N-acetylmuramic acid (anhMurNAc) with the simultaneous cleavage of the 1,6-anhydro ring, generating MurNAc-6-P. Is required for the utilization of anhMurNAc either imported from the medium or derived from its own cell wall murein, and thus plays a role in cell wall recycling. This is Anhydro-N-acetylmuramic acid kinase from Escherichia coli O81 (strain ED1a).